Consider the following 155-residue polypeptide: Small ribosomal subunit protein uS7cz/uS7cy (155 aa).

The protein belongs to the universal ribosomal protein uS7 family. Part of the 30S ribosomal subunit.

It is found in the plastid. The protein resides in the chloroplast. Functionally, one of the primary rRNA binding proteins, it binds directly to 16S rRNA where it nucleates assembly of the head domain of the 30S subunit. This Psilotum nudum (Whisk fern) protein is Small ribosomal subunit protein uS7cz/uS7cy (rps7-A).